Here is a 237-residue protein sequence, read N- to C-terminus: Ribosomal RNA small subunit methyltransferase G (237 aa).

S-adenosyl-L-methionine contacts are provided by residues Gly-78, Phe-83, 129 to 130, and Arg-148; that span reads AE.

The protein belongs to the methyltransferase superfamily. RNA methyltransferase RsmG family.

It is found in the cytoplasm. Specifically methylates the N7 position of a guanine in 16S rRNA. The polypeptide is Ribosomal RNA small subunit methyltransferase G (Streptococcus thermophilus (strain CNRZ 1066)).